Here is a 259-residue protein sequence, read N- to C-terminus: Leucine-rich repeat-containing protein 3B (259 aa).

An N-terminal signal peptide occupies residues 1–33 (MNLVDLWLTRSLSMCLLLQSFVLMILCFHSASM). One can recognise an LRRNT domain in the interval 34 to 64 (CPKGCLCSSSGGLNVTCSNANLKEIPRDLPP). Asn47 is a glycosylation site (N-linked (GlcNAc...) asparagine). 3 LRR repeats span residues 65 to 86 (ETVLLYLDSNQITSIPNEIFKD), 89 to 110 (QLRVLNLSKNGIEFIDEHAFKG), and 114 to 135 (TLQTLDLSDNRIQSVHKNAFNN). A glycan (N-linked (GlcNAc...) asparagine) is linked at Asn94. The LRRCT domain occupies 145 to 197 (NPWHCDCTLQQVLRSMVSNHETAHNVICKTSVLDEHAGRPFLNAANDADLCNL). A helical transmembrane segment spans residues 205–225 (AMLVTMFGWFTMVISYVVYYV).

The protein belongs to the LRRC3 family.

It is found in the membrane. The chain is Leucine-rich repeat-containing protein 3B (LRRC3B) from Bos taurus (Bovine).